Here is a 1076-residue protein sequence, read N- to C-terminus: Ribosome quality control complex subunit NEMF (1076 aa).

Thr-7 is modified (phosphothreonine). A coiled-coil region spans residues 296–359 (VDEFYSKIEG…LIEMNLQIVD (64 aa)). Ser-417 is subject to Phosphoserine. Positions 420-453 (EDDDVDGDVNVEKNETEPPKGKKKKQKNKQLQKP) are disordered. The span at 429-439 (NVEKNETEPPK) shows a compositional bias: basic and acidic residues. Over residues 440 to 449 (GKKKKQKNKQ) the composition is skewed to basic residues. The stretch at 483–514 (AAKKTQKTVEAAEKAFKSAEKKTKQTLKEVQT) forms a coiled coil. Composition is skewed to acidic residues over residues 691 to 710 (ISEE…EDKE) and 742 to 754 (LIQE…EGEY). Disordered regions lie at residues 691-715 (ISEE…HETP) and 742-972 (LIQE…DLDQ). Phosphoserine is present on residues Ser-747, Ser-748, and Ser-763. Residues 755–768 (EEVRKDQDSVGEMK) are compositionally biased toward basic and acidic residues. Residues 777–795 (YPDTTIDLSHLQPQRSIQK) are compositionally biased toward polar residues. Ser-831 is subject to Phosphoserine. Over residues 839–854 (LEGKDKEKESTVHIET) the composition is skewed to basic and acidic residues. The stretch at 869 to 894 (KRGQKSKMKKMKEKYKDQDEEDRELI) forms a coiled coil. Over residues 870–881 (RGQKSKMKKMKE) the composition is skewed to basic residues. Over residues 937-965 (DNIKKETPFLEVITHELQDFAVDDPHDDK) the composition is skewed to basic and acidic residues.

Belongs to the NEMF family. In terms of assembly, component of the ribosome quality control complex (RQC), composed of the E3 ubiquitin ligase LTN1, TCF25 and NEMF associated with the 60S ribosomal subunit. The complex probably also contains VCP/p97 and its ubiquitin-binding cofactors. Interacts (via its N-terminus) with XPO1. As to expression, expressed in brain, heart, liver, lung, spleen, and skeletal muscle. Also expressed at lower levels in stomach and testis.

Its subcellular location is the cytoplasm. It localises to the cytosol. It is found in the nucleus. Its function is as follows. Key component of the ribosome quality control complex (RQC), a ribosome-associated complex that mediates the extraction of incompletely synthesized nascent chains from stalled ribosomes as well as their ubiquitin-mediated proteasomal degradation. Thereby, frees 60S subunit ribosomes from the stalled translation complex and prevents the accumulation of nascent polypeptide chains that are potentially toxic for the cell. Within the RQC complex, NEMF specifically binds stalled 60S ribosomal subunits by recognizing an exposed, nascent chain-conjugated tRNA moiety and promotes the recruitment of LTN1 to stalled 60S subunits. Following binding to stalled 60S ribosomal subunits, NEMF mediates CAT tailing by recruiting alanine-charged tRNA to the A-site and directing the elongation of stalled nascent chains independently of mRNA or 40S subunits, leading to non-templated C-terminal alanine extensions (CAT tails). Mainly recruits alanine-charged tRNAs, but can also other amino acid-charged tRNAs. CAT tailing is required to promote ubiquitination of stalled nascent chains by different E3 ubiquitin-protein ligases. In the canonical RQC pathway (RQC-L), CAT tailing facilitates LTN1-dependent ubiquitination by exposing lysine residues that would otherwise remain buried in the ribosomal exit tunnel. In the alternative RQC pathway (RQC-C) CAT tailing creates an C-degron mainly composed of alanine that is recognized by the CRL2(KLHDC10) and RCHY1/PIRH2 E3 ligases, leading to ubiquitination and degradation of stalled nascent chains. NEMF may also indirectly play a role in nuclear export. The sequence is that of Ribosome quality control complex subunit NEMF from Homo sapiens (Human).